Consider the following 83-residue polypeptide: Exodeoxyribonuclease 7 small subunit (83 aa).

It belongs to the XseB family. In terms of assembly, heterooligomer composed of large and small subunits.

The protein localises to the cytoplasm. The catalysed reaction is Exonucleolytic cleavage in either 5'- to 3'- or 3'- to 5'-direction to yield nucleoside 5'-phosphates.. Functionally, bidirectionally degrades single-stranded DNA into large acid-insoluble oligonucleotides, which are then degraded further into small acid-soluble oligonucleotides. The polypeptide is Exodeoxyribonuclease 7 small subunit (Rhodopseudomonas palustris (strain ATCC BAA-98 / CGA009)).